Reading from the N-terminus, the 272-residue chain is tRNA pseudouridine synthase B (272 aa).

Aspartate 38 functions as the Nucleophile in the catalytic mechanism.

Belongs to the pseudouridine synthase TruB family. Type 1 subfamily.

It catalyses the reaction uridine(55) in tRNA = pseudouridine(55) in tRNA. Responsible for synthesis of pseudouridine from uracil-55 in the psi GC loop of transfer RNAs. The polypeptide is tRNA pseudouridine synthase B (Campylobacter jejuni (strain RM1221)).